The chain runs to 245 residues: tRNA pseudouridine synthase A (245 aa).

Catalysis depends on Asp52, which acts as the Nucleophile. Tyr111 contacts substrate.

It belongs to the tRNA pseudouridine synthase TruA family. As to quaternary structure, homodimer.

It catalyses the reaction uridine(38/39/40) in tRNA = pseudouridine(38/39/40) in tRNA. Its function is as follows. Formation of pseudouridine at positions 38, 39 and 40 in the anticodon stem and loop of transfer RNAs. This is tRNA pseudouridine synthase A from Wolbachia pipientis subsp. Culex pipiens (strain wPip).